The chain runs to 129 residues: Small ribosomal subunit protein uS9 (129 aa).

Belongs to the universal ribosomal protein uS9 family.

In Wolinella succinogenes (strain ATCC 29543 / DSM 1740 / CCUG 13145 / JCM 31913 / LMG 7466 / NCTC 11488 / FDC 602W) (Vibrio succinogenes), this protein is Small ribosomal subunit protein uS9.